A 163-amino-acid chain; its full sequence is NADH-quinone oxidoreductase subunit I (163 aa).

4Fe-4S ferredoxin-type domains are found at residues 53–83 (LRRY…IEAG) and 94–123 (TLYD…LTPE). Residues Cys63, Cys66, Cys69, Cys73, Cys103, Cys106, Cys109, and Cys113 each contribute to the [4Fe-4S] cluster site.

This sequence belongs to the complex I 23 kDa subunit family. In terms of assembly, NDH-1 is composed of 14 different subunits. Subunits NuoA, H, J, K, L, M, N constitute the membrane sector of the complex. [4Fe-4S] cluster is required as a cofactor.

The protein localises to the cell inner membrane. It catalyses the reaction a quinone + NADH + 5 H(+)(in) = a quinol + NAD(+) + 4 H(+)(out). NDH-1 shuttles electrons from NADH, via FMN and iron-sulfur (Fe-S) centers, to quinones in the respiratory chain. The immediate electron acceptor for the enzyme in this species is believed to be ubiquinone. Couples the redox reaction to proton translocation (for every two electrons transferred, four hydrogen ions are translocated across the cytoplasmic membrane), and thus conserves the redox energy in a proton gradient. This is NADH-quinone oxidoreductase subunit I from Coxiella burnetii (strain Dugway 5J108-111).